A 128-amino-acid chain; its full sequence is Probable 4-amino-4-deoxy-L-arabinose-phosphoundecaprenol flippase subunit ArnF (128 aa).

Residues 1–21 (MGLMWGLFSVIIASAAQLSLG) form a helical membrane-spanning segment. The Periplasmic portion of the chain corresponds to 22–35 (YAASHLPPMTQFWD). Residues 36–56 (FIAAFFAFGPGARMLVVGLVG) form a helical membrane-spanning segment. The Cytoplasmic portion of the chain corresponds to 57–76 (YLLSVFCWYKALHQLALSKA). A helical membrane pass occupies residues 77 to 97 (YALLSMSYVLVWIASMVLPGW). Over 98-100 (EGT) the chain is Periplasmic. A helical membrane pass occupies residues 101 to 121 (FSLKALLGVACIMSGLMLIFL). Topologically, residues 122–128 (PTTKQRY) are cytoplasmic.

Belongs to the ArnF family. In terms of assembly, heterodimer of ArnE and ArnF.

The protein localises to the cell inner membrane. The protein operates within bacterial outer membrane biogenesis; lipopolysaccharide biosynthesis. Functionally, translocates 4-amino-4-deoxy-L-arabinose-phosphoundecaprenol (alpha-L-Ara4N-phosphoundecaprenol) from the cytoplasmic to the periplasmic side of the inner membrane. This is Probable 4-amino-4-deoxy-L-arabinose-phosphoundecaprenol flippase subunit ArnF from Escherichia fergusonii (strain ATCC 35469 / DSM 13698 / CCUG 18766 / IAM 14443 / JCM 21226 / LMG 7866 / NBRC 102419 / NCTC 12128 / CDC 0568-73).